The primary structure comprises 590 residues: DELLA protein GAI1 (590 aa).

Basic residues predominate over residues 1–10 (MKREYHHPHH). Residues 1-28 (MKREYHHPHHPTCSTSPTGKGKMWDADP) are disordered. Positions 35-39 (DELLA) match the DELLA motif motif. The tract at residues 153 to 182 (HIEQPPQQPPAPPLYQRDNKRLKPTTSATA) is disordered. A GRAS domain is found at 205–575 (VDSQETGIRL…RPLIATSAWQ (371 aa)). Residues 212 to 266 (IRLVHTLMACAEAVQQENLKLAEALVKQIGFLAVSQAGAMRKVATYFAEGLARRI) form a leucine repeat I (LRI) region. The tract at residues 284 to 349 (QMHFYETCPY…GGPPSFRLTG (66 aa)) is VHIID. A VHIID motif is present at residues 315-319 (VHVID). Residues 363 to 395 (EVGWKLAQLAETIHVEFEYRGFVANSLADLDAS) form a leucine repeat II (LRII) region. The segment at 405–496 (VAVNSVFELH…EVYLGQQICN (92 aa)) is PFYRE. The LXXLL motif motif lies at 413–417 (LHSLL). The interval 499–575 (ACEGPERVER…RPLIATSAWQ (77 aa)) is SAW.

The protein belongs to the GRAS family. DELLA subfamily. Phosphorylated. In terms of processing, ubiquitinated. Upon GA application it is ubiquitinated, leading to its subsequent degradation.

It is found in the nucleus. Functionally, probable transcriptional regulator that acts as a repressor of the gibberellin (GA) signaling pathway. Probably acts by participating in large multiprotein complexes that repress transcription of GA-inducible genes. Upon GA application, it is degraded by the proteasome, allowing the GA signaling pathway. This Vitis vinifera (Grape) protein is DELLA protein GAI1 (GAI1).